A 275-amino-acid polypeptide reads, in one-letter code: Hydroxyethylthiazole kinase (275 aa).

Methionine 50 contacts substrate. ATP contacts are provided by arginine 126 and serine 171. Residue alanine 200 coordinates substrate.

Belongs to the Thz kinase family. Mg(2+) is required as a cofactor.

It carries out the reaction 5-(2-hydroxyethyl)-4-methylthiazole + ATP = 4-methyl-5-(2-phosphooxyethyl)-thiazole + ADP + H(+). The protein operates within cofactor biosynthesis; thiamine diphosphate biosynthesis; 4-methyl-5-(2-phosphoethyl)-thiazole from 5-(2-hydroxyethyl)-4-methylthiazole: step 1/1. Its function is as follows. Catalyzes the phosphorylation of the hydroxyl group of 4-methyl-5-beta-hydroxyethylthiazole (THZ). This chain is Hydroxyethylthiazole kinase, found in Acinetobacter baumannii (strain ATCC 17978 / DSM 105126 / CIP 53.77 / LMG 1025 / NCDC KC755 / 5377).